A 306-amino-acid polypeptide reads, in one-letter code: MAVARLAAVAAWVPCRSWGCAAVPFGPHRGLSALLARIPQRAPRWLPACRQKTSLSFLNRPDLPNLAYKKLKGKSPGIIFIPGYLSYMNGTKALAIEEFCKSLGHACIRFDYSGVGSSDGNSEESTLGKWRKDVLSIIDDLADGPQILVGSSLGGWLMLHAAIARPEKVVALLGVATAADTLVTKFNQLPVELKKEVEMKGVWSMPSKYSEEGVYNIQYSFIKEAEHHCLLHSPIPVNCPIRLLHGMKDDIVPWHTSMQVADRVLSTDVDVILRKHSDHRMKEKADIQLLVYTIDDLIDKLSTIVN.

The transit peptide at 1–52 directs the protein to the mitochondrion; sequence MAVARLAAVAAWVPCRSWGCAAVPFGPHRGLSALLARIPQRAPRWLPACRQK. The region spanning 78-177 is the AB hydrolase-1 domain; sequence IIFIPGYLSY…KVVALLGVAT (100 aa). Active-site charge relay system residues include Ser152, Asp249, and His279.

This sequence belongs to the AB hydrolase superfamily.

It localises to the mitochondrion. It catalyses the reaction S-hexadecanoyl-L-cysteinyl-[protein] + H2O = L-cysteinyl-[protein] + hexadecanoate + H(+). The catalysed reaction is mycophenolic acid O-acyl-beta-D-glucuronide + H2O = mycophenolate + D-glucuronate + H(+). Inhibited by palmostatin-B. In terms of biological role, acts as an acyl-protein thioesterase that hydrolyzes fatty acids from acylated residues in proteins. Regulates the mitochondrial S-depalmitoylation of the nucleophilic active site residue of peroxiredoxin-5/PRDX5, a key antioxidant protein, therefore modulating mitochondrial antioxidant ability. Also catalyzes the deglucuronidation of mycophenolic acid acyl-glucuronide, an active metabolite of the immunosuppressant drug mycophenolate. The polypeptide is Palmitoyl-protein thioesterase ABHD10, mitochondrial (ABHD10) (Pongo abelii (Sumatran orangutan)).